The primary structure comprises 92 residues: MSRSVWKGPFVDAYVLKKAAAVRESGRNEVIKIWSRRSTILPQFVGLTFGVYNGQKHIPVNVTEDMIGQKFGEYSPTRTYYGHAADKKAKRK.

The protein belongs to the universal ribosomal protein uS19 family.

Protein S19 forms a complex with S13 that binds strongly to the 16S ribosomal RNA. This chain is Small ribosomal subunit protein uS19, found in Ruegeria pomeroyi (strain ATCC 700808 / DSM 15171 / DSS-3) (Silicibacter pomeroyi).